The following is a 140-amino-acid chain: ATP synthase epsilon chain (140 aa).

This sequence belongs to the ATPase epsilon chain family. In terms of assembly, F-type ATPases have 2 components, CF(1) - the catalytic core - and CF(0) - the membrane proton channel. CF(1) has five subunits: alpha(3), beta(3), gamma(1), delta(1), epsilon(1). CF(0) has three main subunits: a, b and c.

It localises to the cell inner membrane. Functionally, produces ATP from ADP in the presence of a proton gradient across the membrane. This is ATP synthase epsilon chain from Vibrio vulnificus (strain CMCP6).